Reading from the N-terminus, the 292-residue chain is Sulfofructosephosphate aldolase (292 aa).

K193 acts as the Schiff-base intermediate with substrate in catalysis.

This sequence belongs to the aldolase LacD family. As to quaternary structure, homotetramer.

The catalysed reaction is 6-deoxy-6-sulfo-D-fructose 1-phosphate = (2S)-3-sulfolactaldehyde + dihydroxyacetone phosphate. Functionally, cleaves 6-deoxy-6-sulfo-D-fructose 1-phosphate (SFP) to form dihydroxyacetone phosphate (DHAP) and 3-sulfolactaldehyde (SLA). Can also catalyze the reverse reaction. The chain is Sulfofructosephosphate aldolase (yihT) from Salmonella typhimurium (strain LT2 / SGSC1412 / ATCC 700720).